The sequence spans 211 residues: Ubiquitin-conjugating enzyme E2 S (211 aa).

The region spanning 11–157 (HVIRQVYKEV…ARLMTEIHAH (147 aa)) is the UBC core domain. Cys-95 (glycyl thioester intermediate) is an active-site residue. The segment covering 157-167 (HSSSLRGKDPT) has biased composition (basic and acidic residues). Residues 157-211 (HSSSLRGKDPTDPCSSASVTGALGDGPMAKKHAGDRDKKLAAKKKTDKKRALRRL) are disordered. Residues 197–211 (AAKKKTDKKRALRRL) show a composition bias toward basic residues.

The protein belongs to the ubiquitin-conjugating enzyme family.

It catalyses the reaction S-ubiquitinyl-[E1 ubiquitin-activating enzyme]-L-cysteine + [E2 ubiquitin-conjugating enzyme]-L-cysteine = [E1 ubiquitin-activating enzyme]-L-cysteine + S-ubiquitinyl-[E2 ubiquitin-conjugating enzyme]-L-cysteine.. It participates in protein modification; protein ubiquitination. Functionally, catalyzes the covalent attachment of ubiquitin to other proteins. Acts as an essential factor of the anaphase promoting complex/cyclosome (APC/C), a cell cycle-regulated ubiquitin ligase that controls progression through mitosis. Acts by specifically elongating 'Lys-11'-linked polyubiquitin chains initiated by the E2 enzyme ube2c/ubch10 on APC/C substrates, enhancing the degradation of APC/C substrates by the proteasome and promoting mitotic exit. The chain is Ubiquitin-conjugating enzyme E2 S (ube2s) from Aquarana catesbeiana (American bullfrog).